Reading from the N-terminus, the 367-residue chain is 2-aminoethylphosphonate--pyruvate transaminase (367 aa).

Residue Lys-194 is modified to N6-(pyridoxal phosphate)lysine.

Belongs to the class-V pyridoxal-phosphate-dependent aminotransferase family. PhnW subfamily. In terms of assembly, homodimer. The cofactor is pyridoxal 5'-phosphate.

The catalysed reaction is (2-aminoethyl)phosphonate + pyruvate = phosphonoacetaldehyde + L-alanine. Its function is as follows. Involved in phosphonate degradation. The chain is 2-aminoethylphosphonate--pyruvate transaminase from Salmonella dublin (strain CT_02021853).